Consider the following 607-residue polypeptide: Monocarboxylate transporter 7 (607 aa).

A disordered region spans residues 1-84 (MRASGQGPQR…PAETGCSRSR (84 aa)). The Cytoplasmic portion of the chain corresponds to 1–105 (MRASGQGPQR…ANVYTQVPDG (105 aa)). The chain crosses the membrane as a helical span at residues 106–126 (GWGWAVAVSFFFVEVFTYGII). Residues 127 to 146 (KSFGVFFNDLMDSFDESNSK) lie on the Extracellular side of the membrane. A helical membrane pass occupies residues 147–167 (ISWIISICVFVLTFTAPLSTV). At 168–175 (LSNRFGHR) the chain is on the cytoplasmic side. A helical transmembrane segment spans residues 176–196 (LVVMAGGLLISLGMITASFSQ). Residues 197-202 (RVYHMY) lie on the Extracellular side of the membrane. Residues 203–223 (ISIGVISGLGYCFSFLPTVTI) traverse the membrane as a helical segment. Residues 224–233 (LSQYFDKRRS) are Cytoplasmic-facing. A helical membrane pass occupies residues 234–254 (VVTAVASTGECFAVFAFAPAI). Residues 255-268 (TALKEHIGWRYSLL) are Extracellular-facing. The helical transmembrane segment at 269–289 (FVGLLQLNIMVCGALLRPIII) threads the bilayer. The Cytoplasmic portion of the chain corresponds to 290-383 (QGPGQSPKAV…KEKSFICYAL (94 aa)). Residues serine 319, serine 322, serine 325, and serine 332 each carry the phosphoserine modification. Residues 384-404 (FGLFATLGFFAPSLYIIPLGI) traverse the membrane as a helical segment. The Extracellular segment spans residues 405–414 (SLGIDPDRAA). The chain crosses the membrane as a helical span at residues 415–435 (FLLSTMAIAEVFGRIGAGFVL). Residues 436–442 (NREPIRK) lie on the Cytoplasmic side of the membrane. Residues 443–463 (IYIELICVILLTASLFAFTFA) traverse the membrane as a helical segment. Over 464–465 (TE) the chain is Extracellular. Residues 466 to 486 (FWGLMLCSVFFGSMVGTIGGT) form a helical membrane-spanning segment. At 487–507 (HIPMLAEDDVVGIEKMSSAAG) the chain is on the cytoplasmic side. The chain crosses the membrane as a helical span at residues 508–528 (VYVFIQSISGLAGPPLAGLLV). At 529-536 (DQSKIYSR) the chain is on the extracellular side. Residues 537–557 (AFYSCAAGMCLAAVCLALVRP) traverse the membrane as a helical segment. Residues 558–607 (CKKGLCQNSHSGENQTDRQRGKALQDIPEDFLEMDLGKCEHRAHMKMDPV) are Cytoplasmic-facing.

The protein belongs to the major facilitator superfamily. Monocarboxylate porter (TC 2.A.1.13) family. In terms of assembly, forms functional complexes with BSG/CD147 or EMB/GP70 ancillary proteins.

The protein resides in the basolateral cell membrane. It catalyses the reaction taurine(out) = taurine(in). Monocarboxylate transporter selective for taurine. May associate with BSG/CD147 or EMB/GP70 ancillary proteins to mediate facilitative efflux or influx of taurine across the plasma membrane. The transport is pH- and sodium-independent. Rather low-affinity, is likely effective for taurine transport in tissues where taurine is present at high concentrations. In Mus musculus (Mouse), this protein is Monocarboxylate transporter 7.